Reading from the N-terminus, the 267-residue chain is Aspartate/glutamate leucyltransferase (267 aa).

The interval 246–267 is disordered; sequence EQEEQTRPLFRPSATGFSTGQE.

The protein belongs to the R-transferase family. Bpt subfamily.

It is found in the cytoplasm. It carries out the reaction N-terminal L-glutamyl-[protein] + L-leucyl-tRNA(Leu) = N-terminal L-leucyl-L-glutamyl-[protein] + tRNA(Leu) + H(+). It catalyses the reaction N-terminal L-aspartyl-[protein] + L-leucyl-tRNA(Leu) = N-terminal L-leucyl-L-aspartyl-[protein] + tRNA(Leu) + H(+). In terms of biological role, functions in the N-end rule pathway of protein degradation where it conjugates Leu from its aminoacyl-tRNA to the N-termini of proteins containing an N-terminal aspartate or glutamate. The sequence is that of Aspartate/glutamate leucyltransferase from Granulibacter bethesdensis (strain ATCC BAA-1260 / CGDNIH1).